The chain runs to 129 residues: L-ectoine synthase (129 aa).

The protein belongs to the ectoine synthase family.

The enzyme catalyses (2S)-4-acetamido-2-aminobutanoate = L-ectoine + H2O. It functions in the pathway amine and polyamine biosynthesis; ectoine biosynthesis; L-ectoine from L-aspartate 4-semialdehyde: step 3/3. Its function is as follows. Catalyzes the circularization of gamma-N-acetyl-alpha,gamma-diaminobutyric acid (ADABA) to ectoine (1,4,5,6-tetrahydro-2-methyl-4-pyrimidine carboxylic acid), which is an excellent osmoprotectant. The sequence is that of L-ectoine synthase from Halalkalibacterium halodurans (strain ATCC BAA-125 / DSM 18197 / FERM 7344 / JCM 9153 / C-125) (Bacillus halodurans).